The chain runs to 231 residues: tRNA (guanine-N(7)-)-methyltransferase (231 aa).

Glutamate 62, glutamate 87, aspartate 114, and aspartate 136 together coordinate S-adenosyl-L-methionine. The active site involves aspartate 136. Substrate-binding positions include lysine 140, aspartate 172, and 210 to 213; that span reads TRYE.

It belongs to the class I-like SAM-binding methyltransferase superfamily. TrmB family.

The enzyme catalyses guanosine(46) in tRNA + S-adenosyl-L-methionine = N(7)-methylguanosine(46) in tRNA + S-adenosyl-L-homocysteine. Its pathway is tRNA modification; N(7)-methylguanine-tRNA biosynthesis. Functionally, catalyzes the formation of N(7)-methylguanine at position 46 (m7G46) in tRNA. The polypeptide is tRNA (guanine-N(7)-)-methyltransferase (Zymomonas mobilis subsp. mobilis (strain ATCC 31821 / ZM4 / CP4)).